The following is a 225-amino-acid chain: Histone H1.5 (225 aa).

Positions 1–23 are disordered; the sequence is MSDVAVAETPAVKTPTKASKATK. Residue Ser2 is modified to N-acetylserine. Residues 9–19 are compositionally biased toward low complexity; that stretch reads TPAVKTPTKAS. In terms of domain architecture, H15 spans 37–113; that stretch reads AHPPFINMIT…GANGRFRLAV (77 aa). A compositionally biased stretch (basic and acidic residues) spans 145-156; that stretch reads KKTVAKKTGDKV. Residues 145-225 are disordered; the sequence is KKTVAKKTGD…RKAVGTAPKA (81 aa). A compositionally biased stretch (basic residues) spans 157-175; that stretch reads KKVKSPKRIAKPAVKKVTK. Over residues 176 to 208 the composition is skewed to low complexity; it reads KAAAPTKSAANETAPKKAAATEAAPKKAAVTKA.

It belongs to the histone H1/H5 family.

The protein localises to the nucleus. It is found in the chromosome. In terms of biological role, histones H1 are necessary for the condensation of nucleosome chains into higher-order structures. This chain is Histone H1.5 (hil-5), found in Caenorhabditis elegans.